The primary structure comprises 236 residues: MMDDSFKNYWMNKLKYFSLFILLFAIYWFPDVILGYPEIYLKSLVGYDRQATATWIFLGNMAISLFLGILICYKLGYYKNTLSIFKIKNILFLLFTTIVLFIIYFFTFTYYNSHFITPGIAKEQAAYSRQIVFPFVQFISFAICAPIFEEAAFRTTIYRFFKNDKIAFIVSSISFAWMHTGANPILIVYLPMSVVLTLIYHRRRVLGESILVHCLMNALLPTIIVFLQTITGLYYL.

The next 6 membrane-spanning stretches (helical) occupy residues 16–36, 51–71, 90–110, 131–151, 180–200, and 210–230; these read YFSLFILLFAIYWFPDVILGY, ATATWIFLGNMAISLFLGILI, ILFLLFTTIVLFIIYFFTFTY, IVFPFVQFISFAICAPIFEEA, TGANPILIVYLPMSVVLTLIY, and ILVHCLMNALLPTIIVFLQTI.

This sequence belongs to the UPF0177 family.

It localises to the cell membrane. This is UPF0177 protein YaiH (yaiH) from Lactococcus lactis subsp. lactis (strain IL1403) (Streptococcus lactis).